We begin with the raw amino-acid sequence, 995 residues long: UPF0182 protein MMAR_1371 (995 aa).

The next 7 helical transmembrane spans lie at Val-18–Asp-38, Phe-63–Leu-83, Leu-113–Tyr-133, Phe-175–Ile-195, Ile-210–Asp-230, Lys-259–Leu-279, and Ile-287–Val-307. The disordered stretch occupies residues Ala-900–Ser-948. Over residues Gly-928–Pro-941 the composition is skewed to pro residues.

The protein belongs to the UPF0182 family.

The protein resides in the cell membrane. The polypeptide is UPF0182 protein MMAR_1371 (Mycobacterium marinum (strain ATCC BAA-535 / M)).